The chain runs to 106 residues: uncharacterized protein (106 aa).

It localises to the mitochondrion. This is an uncharacterized protein from Arabidopsis thaliana (Mouse-ear cress).